We begin with the raw amino-acid sequence, 244 residues long: Phosphoadenosine 5'-phosphosulfate reductase (244 aa).

The active-site Nucleophile; cysteine thiosulfonate intermediate is the Cys-239.

It belongs to the PAPS reductase family. CysH subfamily.

It is found in the cytoplasm. It catalyses the reaction [thioredoxin]-disulfide + sulfite + adenosine 3',5'-bisphosphate + 2 H(+) = [thioredoxin]-dithiol + 3'-phosphoadenylyl sulfate. The protein operates within sulfur metabolism; hydrogen sulfide biosynthesis; sulfite from sulfate: step 3/3. Functionally, catalyzes the formation of sulfite from phosphoadenosine 5'-phosphosulfate (PAPS) using thioredoxin as an electron donor. The sequence is that of Phosphoadenosine 5'-phosphosulfate reductase from Salmonella typhi.